A 440-amino-acid chain; its full sequence is Chromosomal replication initiator protein DnaA (440 aa).

Residues 1 to 74 (MNPSQILENL…VQSGNKAIIN (74 aa)) are domain I, interacts with DnaA modulators. The interval 74 to 99 (NIQAQSTKQSNKSTKIDIAHIQAQST) is domain II. The interval 100 to 316 (ILNPSFTFES…GIIISLNAYA (217 aa)) is domain III, AAA+ region. ATP is bound by residues glycine 146, glycine 148, lysine 149, and threonine 150. Residues 317-440 (TILGQEITLE…KNKILIKSQS (124 aa)) are domain IV, binds dsDNA.

This sequence belongs to the DnaA family. Oligomerizes as a right-handed, spiral filament on DNA at oriC.

It localises to the cytoplasm. Its function is as follows. Plays an essential role in the initiation and regulation of chromosomal replication. ATP-DnaA binds to the origin of replication (oriC) to initiate formation of the DNA replication initiation complex once per cell cycle. Binds the DnaA box (a 9 base pair repeat at the origin) and separates the double-stranded (ds)DNA. Forms a right-handed helical filament on oriC DNA; dsDNA binds to the exterior of the filament while single-stranded (ss)DNA is stabiized in the filament's interior. The ATP-DnaA-oriC complex binds and stabilizes one strand of the AT-rich DNA unwinding element (DUE), permitting loading of DNA polymerase. After initiation quickly degrades to an ADP-DnaA complex that is not apt for DNA replication. Binds acidic phospholipids. In Campylobacter jejuni subsp. doylei (strain ATCC BAA-1458 / RM4099 / 269.97), this protein is Chromosomal replication initiator protein DnaA.